The following is a 228-amino-acid chain: Cytidylate kinase (228 aa).

An ATP-binding site is contributed by 17 to 25 (GPTASGKGT).

Belongs to the cytidylate kinase family. Type 1 subfamily.

The protein localises to the cytoplasm. It carries out the reaction CMP + ATP = CDP + ADP. The enzyme catalyses dCMP + ATP = dCDP + ADP. This is Cytidylate kinase from Burkholderia thailandensis (strain ATCC 700388 / DSM 13276 / CCUG 48851 / CIP 106301 / E264).